Consider the following 365-residue polypeptide: 3-dehydroquinate synthase (365 aa).

NAD(+)-binding positions include 75-80, 109-113, 133-134, lysine 146, and lysine 155; these read DAESGK, GAATD, and TT. Positions 188, 253, and 269 each coordinate Zn(2+).

The protein belongs to the sugar phosphate cyclases superfamily. Dehydroquinate synthase family. It depends on NAD(+) as a cofactor. Co(2+) is required as a cofactor. Requires Zn(2+) as cofactor.

It localises to the cytoplasm. It carries out the reaction 7-phospho-2-dehydro-3-deoxy-D-arabino-heptonate = 3-dehydroquinate + phosphate. The protein operates within metabolic intermediate biosynthesis; chorismate biosynthesis; chorismate from D-erythrose 4-phosphate and phosphoenolpyruvate: step 2/7. Its function is as follows. Catalyzes the conversion of 3-deoxy-D-arabino-heptulosonate 7-phosphate (DAHP) to dehydroquinate (DHQ). The polypeptide is 3-dehydroquinate synthase (Corynebacterium efficiens (strain DSM 44549 / YS-314 / AJ 12310 / JCM 11189 / NBRC 100395)).